A 579-amino-acid polypeptide reads, in one-letter code: Probable serine/threonine-protein kinase kinY (579 aa).

The segment at 1-24 (MINGEQTMVEDELPDQGKPMSDES) is disordered. Residues 32–309 (LKVGESIGSG…HVLKQLTSLF (278 aa)) form the Protein kinase domain. ATP-binding positions include 38 to 46 (IGSGAYGIV) and lysine 59. The Proton acceptor role is filled by aspartate 167.

Belongs to the protein kinase superfamily. TKL Ser/Thr protein kinase family.

It carries out the reaction L-seryl-[protein] + ATP = O-phospho-L-seryl-[protein] + ADP + H(+). The enzyme catalyses L-threonyl-[protein] + ATP = O-phospho-L-threonyl-[protein] + ADP + H(+). The protein is Probable serine/threonine-protein kinase kinY (kinY) of Dictyostelium discoideum (Social amoeba).